We begin with the raw amino-acid sequence, 32 residues long: Photosystem I reaction center subunit XII (32 aa).

Residues 9–28 form a helical membrane-spanning segment; the sequence is VYIALVVALIPGLLAWRLAT.

Belongs to the PsaM family.

The protein localises to the cellular thylakoid membrane. The chain is Photosystem I reaction center subunit XII from Nostoc sp. (strain PCC 7120 / SAG 25.82 / UTEX 2576).